Reading from the N-terminus, the 197-residue chain is Glycerol-3-phosphate acyltransferase (197 aa).

The next 6 membrane-spanning stretches (helical) occupy residues 1 to 21 (MNILIIFASYLLGSLPTGFLI), 50 to 70 (WPALFVFIIDLGKGLIAVKIA), 77 to 97 (GLIEVIAGISAISGHIWPIWL), 111 to 131 (MFLALSWKVGLASLGFFLIVL), 137 to 157 (VSLSSISAAILLPIFMFFYLG), and 158 to 178 (KFMHSYFFISLIVALLVIWKH).

The protein belongs to the PlsY family. In terms of assembly, probably interacts with PlsX.

Its subcellular location is the cell inner membrane. The enzyme catalyses an acyl phosphate + sn-glycerol 3-phosphate = a 1-acyl-sn-glycero-3-phosphate + phosphate. The protein operates within lipid metabolism; phospholipid metabolism. Its function is as follows. Catalyzes the transfer of an acyl group from acyl-phosphate (acyl-PO(4)) to glycerol-3-phosphate (G3P) to form lysophosphatidic acid (LPA). This enzyme utilizes acyl-phosphate as fatty acyl donor, but not acyl-CoA or acyl-ACP. This is Glycerol-3-phosphate acyltransferase from Prochlorococcus marinus (strain MIT 9301).